Reading from the N-terminus, the 672-residue chain is MPKRGGGSSQRYNNNVGNGGGRYNAPEDFDDFDVEDRQRRKDRNKRRVSFKPSQCLHNKKDIKLRPEDLRRWDEDDDMSDMTTAVKDRPTSRRRGSPIPRGKFGKLMPNSFGWYQVTLQNAQIYEKETLLSALLAAMSPHVFIPQYWRVERNCVIFFTDDYEAAERIQHLGKNGHLPDGYRLMPRVRSGIPLVAIDDAFKEKMKVTMAKRYNIQTKALDLSRFHADPDLKQVFCPLFRQNVMGAAIDIMCDNIPDLEALNLNDNSISSMEAFKGVEKRLPNLKILYLGDNKIPSLAHLVVLRNLSILELVLKNNPCRSRYKDSQQFISEVRRKFPKLVKLDGETLEPQITFDLSEQGRLLETKASYLCDVAGAEVVRQFLDQYFRIFDSGNRQALLDAYHEKAMLSISMPSASQAGRLNSFWKFNRNLRRLLNGEENRTRNLKYGRLACVSTLDEWPKTQHDRRTFTVDLTIYNTSMMVFTVTGLFKELNDETNNPASMELYDVRHFARTYVVVPQNNGFCIRNETIFITNATHEQVREFKRSQHQPAPGAMPSTSSAVTSPQAGAAAGLQGRLNALGVATGPVAILSGDPLAATAPVNSGSAAISTTAVAPGAQDESTKMQMIEAMSAQSQMNVIWSRKCLEETNWDFNHAAFVFEKLFKENKIPPEAFMK.

Disordered stretches follow at residues 1-52 (MPKR…SFKP) and 73-101 (DEDD…IPRG). The span at 40 to 49 (RKDRNKRRVS) shows a compositional bias: basic residues. Residues 113-193 (WYQVTLQNAQ…PRVRSGIPLV (81 aa)) form the RRM domain. 4 LRR repeats span residues 255–280 (DLEA…KRLP), 281–304 (NLKI…LRNL), 305–332 (SILE…EVRR), and 333–360 (KFPK…GRLL). The NTF2 domain occupies 375 to 529 (VVRQFLDQYF…FCIRNETIFI (155 aa)). The interval 541-564 (KRSQHQPAPGAMPSTSSAVTSPQA) is disordered. The span at 553–563 (PSTSSAVTSPQ) shows a compositional bias: polar residues. A Phosphoserine modification is found at Ser561. The 55-residue stretch at 618-672 (STKMQMIEAMSAQSQMNVIWSRKCLEETNWDFNHAAFVFEKLFKENKIPPEAFMK) folds into the TAP-C domain.

It belongs to the NXF family. As to quaternary structure, interacts with Nxt1. Interacts with ZC3H3. Forms a complex with Nup358/RanBP2, RanGAP and Nxt1. Interacts with Nup54 and Nup58. Interacts with Orc3 and Hpr1. Expressed ubiquitously.

It localises to the nucleus. The protein localises to the nucleoplasm. It is found in the cytoplasm. Its subcellular location is the nucleus envelope. Its function is as follows. Mediates the export of the majority of mRNAs from the nucleus to the cytoplasm. In ovarian follicle cells, plays a role in transposable element silencing regulation by enabling the nuclear export of flamenco (flam) transcripts and subsequent piRNA biogenesis. This is Nuclear RNA export factor 1 from Drosophila melanogaster (Fruit fly).